The following is a 78-amino-acid chain: Large ribosomal subunit protein bL28 (78 aa).

A disordered region spans residues 1–23 (MSRVCQVSGKRVQTGNNVSHANN). Positions 11–22 (RVQTGNNVSHAN) are enriched in polar residues.

Belongs to the bacterial ribosomal protein bL28 family.

The chain is Large ribosomal subunit protein bL28 from Xanthomonas campestris pv. campestris (strain 8004).